A 356-amino-acid polypeptide reads, in one-letter code: Tyrosine recombinase XerS (356 aa).

In terms of domain architecture, Core-binding (CB) spans 16 to 121 (IMPWYVLDYY…ALSSLYKYLT (106 aa)). Residues 169 to 354 (AFLDYVDKEY…VNDEQKNALD (186 aa)) enclose the Tyr recombinase domain. Catalysis depends on residues Arg-210, Lys-234, His-306, Arg-309, and His-332. Tyr-341 acts as the O-(3'-phospho-DNA)-tyrosine intermediate in catalysis.

Belongs to the 'phage' integrase family. XerS subfamily.

It is found in the cytoplasm. FtsK is required for recombination. Functionally, site-specific tyrosine recombinase, which acts by catalyzing the cutting and rejoining of the recombining DNA molecules. Essential to convert dimers of the bacterial chromosome into monomers to permit their segregation at cell division. This is Tyrosine recombinase XerS from Streptococcus pyogenes serotype M5 (strain Manfredo).